The sequence spans 172 residues: Crossover junction endodeoxyribonuclease RuvC (172 aa).

Active-site residues include D11, E70, and D142. 3 residues coordinate Mg(2+): D11, E70, and D142.

Belongs to the RuvC family. As to quaternary structure, homodimer which binds Holliday junction (HJ) DNA. The HJ becomes 2-fold symmetrical on binding to RuvC with unstacked arms; it has a different conformation from HJ DNA in complex with RuvA. In the full resolvosome a probable DNA-RuvA(4)-RuvB(12)-RuvC(2) complex forms which resolves the HJ. It depends on Mg(2+) as a cofactor.

It is found in the cytoplasm. The catalysed reaction is Endonucleolytic cleavage at a junction such as a reciprocal single-stranded crossover between two homologous DNA duplexes (Holliday junction).. The RuvA-RuvB-RuvC complex processes Holliday junction (HJ) DNA during genetic recombination and DNA repair. Endonuclease that resolves HJ intermediates. Cleaves cruciform DNA by making single-stranded nicks across the HJ at symmetrical positions within the homologous arms, yielding a 5'-phosphate and a 3'-hydroxyl group; requires a central core of homology in the junction. The consensus cleavage sequence is 5'-(A/T)TT(C/G)-3'. Cleavage occurs on the 3'-side of the TT dinucleotide at the point of strand exchange. HJ branch migration catalyzed by RuvA-RuvB allows RuvC to scan DNA until it finds its consensus sequence, where it cleaves and resolves the cruciform DNA. The polypeptide is Crossover junction endodeoxyribonuclease RuvC (Hydrogenovibrio crunogenus (strain DSM 25203 / XCL-2) (Thiomicrospira crunogena)).